We begin with the raw amino-acid sequence, 608 residues long: Endo-1,4-beta-xylanase C (608 aa).

The first 25 residues, 1 to 25 (MKTFSVTKSSVVFAMALGMASTAFA), serve as a signal peptide directing secretion. One can recognise a GH11 1 domain in the interval 40-250 (TITSNQTGKI…VNGEVRGGHM (211 aa)). Residue glutamate 142 is the Nucleophile of the active site. Glutamate 237 functions as the Proton donor in the catalytic mechanism. The span at 263 to 294 (SDPVSSSSVKSSSSTDAPKSSSSKGNGNVSGK) shows a compositional bias: low complexity. The segment at 263–296 (SDPVSSSSVKSSSSTDAPKSSSSKGNGNVSGKID) is disordered. One can recognise a GH11 2 domain in the interval 316–514 (NSSVTGNVGS…GSGSFDVTYF (199 aa)). Glutamate 409 (nucleophile) is an active-site residue. The Proton donor role is filled by glutamate 501. Positions 520–539 (AHPLAQPEPESSSSEAKVES) are disordered. Low complexity predominate over residues 527–539 (EPESSSSEAKVES).

The protein belongs to the glycosyl hydrolase 11 (cellulase G) family.

The enzyme catalyses Endohydrolysis of (1-&gt;4)-beta-D-xylosidic linkages in xylans.. The protein operates within glycan degradation; xylan degradation. Functionally, cleaves xylans with the production of xylose, xylobiose and xylo-oligosaccharides. This chain is Endo-1,4-beta-xylanase C (xynC), found in Fibrobacter succinogenes (strain ATCC 19169 / S85).